The chain runs to 466 residues: IQ domain-containing protein C (466 aa).

Residues 6-35 enclose the IQ domain; that stretch reads LVRKVSALQACVRGFLVRRQFQSLRAEYEA. 4 disordered regions span residues 105–157, 214–233, 238–310, and 394–466; these read KSGE…PHSQ, EQAC…DQSY, TGEL…QTFG, and VLDL…EPPG. Basic and acidic residues predominate over residues 132 to 153; it reads PSQEKTRDTTRMENPEATDQRL. Polar residues predominate over residues 282-293; it reads GPPSSIPSNSQA. A compositionally biased stretch (basic and acidic residues) spans 297 to 306; that stretch reads RLTKGPDDGR. Ser438 is modified (phosphoserine).

The polypeptide is IQ domain-containing protein C (IQCC) (Homo sapiens (Human)).